The primary structure comprises 294 residues: Probable 2-(5''-triphosphoribosyl)-3'-dephosphocoenzyme-A synthase (294 aa).

It belongs to the CitG/MdcB family.

The catalysed reaction is 3'-dephospho-CoA + ATP = 2'-(5''-triphospho-alpha-D-ribosyl)-3'-dephospho-CoA + adenine. In Streptococcus pyogenes serotype M18 (strain MGAS8232), this protein is Probable 2-(5''-triphosphoribosyl)-3'-dephosphocoenzyme-A synthase.